Here is an 861-residue protein sequence, read N- to C-terminus: DNA mismatch repair protein MutS (861 aa).

614-621 contacts ATP; the sequence is GPNMGGKS.

This sequence belongs to the DNA mismatch repair MutS family.

Its function is as follows. This protein is involved in the repair of mismatches in DNA. It is possible that it carries out the mismatch recognition step. This protein has a weak ATPase activity. The polypeptide is DNA mismatch repair protein MutS (Mannheimia succiniciproducens (strain KCTC 0769BP / MBEL55E)).